The sequence spans 309 residues: Oxygen-dependent coproporphyrinogen-III oxidase (309 aa).

Ser-94 lines the substrate pocket. A divalent metal cation contacts are provided by His-98 and His-108. The active-site Proton donor is His-108. Position 110–112 (110–112) interacts with substrate; sequence NVR. His-147 and His-177 together coordinate a divalent metal cation. The segment at 242 to 277 is important for dimerization; sequence YVEFNLVWDRGTLFGLQTGGRTESILMSLPPLVRWE. 260 to 262 contributes to the substrate binding site; that stretch reads GGR.

Belongs to the aerobic coproporphyrinogen-III oxidase family. Homodimer. A divalent metal cation is required as a cofactor.

The protein localises to the cytoplasm. The enzyme catalyses coproporphyrinogen III + O2 + 2 H(+) = protoporphyrinogen IX + 2 CO2 + 2 H2O. The protein operates within porphyrin-containing compound metabolism; protoporphyrin-IX biosynthesis; protoporphyrinogen-IX from coproporphyrinogen-III (O2 route): step 1/1. Functionally, involved in the heme biosynthesis. Catalyzes the aerobic oxidative decarboxylation of propionate groups of rings A and B of coproporphyrinogen-III to yield the vinyl groups in protoporphyrinogen-IX. This is Oxygen-dependent coproporphyrinogen-III oxidase from Yersinia pestis bv. Antiqua (strain Antiqua).